Reading from the N-terminus, the 1013-residue chain is Receptor-type tyrosine-protein phosphatase N2 (1013 aa).

The first 19 residues, 1–19 (MALPLLLLLLLLLPPRVLP), serve as a signal peptide directing secretion. The tract at residues 1 to 419 (MALPLLLLLL…PGALPFAKPL (419 aa)) is involved in localization to secretory granules; interaction with CPE. The Extracellular portion of the chain corresponds to 20–613 (AAPSSVPHGR…QAEQEDSTKF (594 aa)). 4 disordered regions span residues 116–137 (RHPEASGPARPSKHSIGSERRY), 273–302 (MPRPLLSPAVPQKWPSPLGDPEDPPSTGEG), 342–382 (DHRG…VQDD), and 401–487 (LQDH…SLPA). Basic and acidic residues predominate over residues 419-430 (LKMERKKSERPE). Residues S434 and S435 each carry the phosphoserine modification. N562 carries an N-linked (GlcNAc...) asparagine glycan. A helical membrane pass occupies residues 614-634 (IALTLVSLACILGVLLASGLI). Residues 635–1013 (YCLRHSSQHR…VNAILKALPQ (379 aa)) lie on the Cytoplasmic side of the membrane. A Tyrosine-based internalization motif motif is present at residues 664–673 (YQELCRQRMA). A disordered region spans residues 673-717 (ATRPPDRPEGPHTSRISSVSSQFSDGPMPSPSARSSASSWSEEPV). The segment covering 686–696 (SRISSVSSQFS) has biased composition (polar residues). Phosphoserine is present on residues S690 and S696. The span at 703-717 (PSARSSASSWSEEPV) shows a compositional bias: low complexity. One can recognise a Tyrosine-protein phosphatase domain in the interval 743–1003 (LEKEWEALCA…EFALTAVAEE (261 aa)). Substrate is bound by residues D911 and 943 to 949 (CSDGAGR). Catalysis depends on C943, which acts as the Phosphocysteine intermediate. The residue at position 968 (K968) is an N6-acetyllysine. Residue Q988 participates in substrate binding. The Leucine-based sorting signal motif lies at 1002 to 1008 (EEVNAIL).

It belongs to the protein-tyrosine phosphatase family. Receptor class 8 subfamily. In terms of assembly, self-associates. Interacts (via cytoplasmic domain) with PTPRN (via cytoplasmic domain). Interacts (precursor form) with CPE. Interacts with HAP1. Interacts with AP2A1 or AP2A2 and AP1G1; indicative for an association with adaptor protein complex 2 (AP-2) and adaptor protein complex 1 (AP-1). Interacts with AP2M1; indicative for an association with adaptor protein complex 2 (AP-2). Interacts with MYO5A. In terms of processing, subject to proteolytic cleavage at multiple sites. As to expression, detected in pancreatic islets and adrenal medulla.

The protein localises to the cytoplasmic vesicle. It localises to the secretory vesicle membrane. Its subcellular location is the secretory vesicle. The protein resides in the synaptic vesicle membrane. It catalyses the reaction O-phospho-L-tyrosyl-[protein] + H2O = L-tyrosyl-[protein] + phosphate. Its function is as follows. Plays a role in vesicle-mediated secretory processes. Required for normal accumulation of secretory vesicles in hippocampus, pituitary and pancreatic islets. Required for the accumulation of normal levels of insulin-containing vesicles and preventing their degradation. Plays a role in insulin secretion in response to glucose stimuli. Required for normal accumulation of the neurotransmitters norepinephrine, dopamine and serotonin in the brain. In females, but not in males, required for normal accumulation and secretion of pituitary hormones, such as luteinizing hormone (LH) and follicle-stimulating hormone (FSH). Required to maintain normal levels of renin expression and renin release. May regulate catalytic active protein-tyrosine phosphatases such as PTPRA through dimerization. Has phosphatidylinositol phosphatase activity; the PIPase activity is involved in its ability to regulate insulin secretion. Can dephosphorylate phosphatidylinositol 4,5-biphosphate, phosphatidylinositol 5-phosphate and phosphatidylinositol 3-phosphate. Regulates PI(4,5)P2 level in the plasma membrane and localization of cofilin at the plasma membrane and thus is indirectly involved in regulation of actin dynamics related to cell migration and metastasis; upon hydrolysis of PI(4,5)P2 cofilin is released from the plasma membrane and acts in the cytoplasm in severing F-actin filaments. The protein is Receptor-type tyrosine-protein phosphatase N2 (PTPRN2) of Macaca nemestrina (Pig-tailed macaque).